Here is a 281-residue protein sequence, read N- to C-terminus: Pantothenate synthetase (281 aa).

ATP is bound at residue 30–37; it reads MGNLHQGH. His37 (proton donor) is an active-site residue. Gln61 provides a ligand contact to (R)-pantoate. Gln61 contacts beta-alanine. 149–152 serves as a coordination point for ATP; sequence GNKD. (R)-pantoate is bound at residue Gln155. Residues Ile178 and 186–189 contribute to the ATP site; that span reads MSSR.

The protein belongs to the pantothenate synthetase family. As to quaternary structure, homodimer.

Its subcellular location is the cytoplasm. It catalyses the reaction (R)-pantoate + beta-alanine + ATP = (R)-pantothenate + AMP + diphosphate + H(+). It participates in cofactor biosynthesis; (R)-pantothenate biosynthesis; (R)-pantothenate from (R)-pantoate and beta-alanine: step 1/1. Catalyzes the condensation of pantoate with beta-alanine in an ATP-dependent reaction via a pantoyl-adenylate intermediate. In Shewanella sp. (strain MR-7), this protein is Pantothenate synthetase.